Reading from the N-terminus, the 407-residue chain is uncharacterized protein (407 aa).

The disordered stretch occupies residues 145–231; it reads EANRFGRSNS…DPLTSITSDT (87 aa). Over residues 158-175 the composition is skewed to basic residues; it reads SNSRSKSSRSRSNNRSKS. Residues 176-196 show a composition bias toward low complexity; it reads SRSSSTQSKSNNRSNSRSNSK. One can recognise an N-acetyltransferase domain in the interval 271–407; it reads IVFETLDQND…NHKIHMEKDI (137 aa).

The protein localises to the virion. This is an uncharacterized protein from Acanthamoeba polyphaga (Amoeba).